The chain runs to 515 residues: MDSAVPLFQMEGISKRYGGVRALEKAELVVTSGSIHAILGENGAGKSTLIKVMAGVVAPDEGRMTLDGREVTFLSPAAANQAGIVCIFQELSLVPDLSVADNIVISDPPKRFGMIDRKAQRRVAEEALARAGAADIHPLALVKDLPLSRRQMVEIAKALARKPRILILDEATSALTAADVSKIFGVLKRLRSEGLALLYISHRMNEIAELADQCTVFRNGRNVASYKAGSKSDNEVVELMIGREYSHIFPAKPAAVPATAAPRLEARKLSWTDRLHDISLTVRAGEVVGLGGLDGQGQRELLLAFFGVLRGLSGEVLIDGKPVAIGSPAKARQDGIGMALIPEDRKTEGLMLPMTVRENLSFAALDRLSKGGIIDRAAEQRLIDDMVGLLAIKTAGLDIPVGALSGGNQQKVVIAKWLMRQPRIILLNDPTRGIDVGTKQELYQLMRKLADAGAAILFYSTDYDELIGCCDRVLVLYDGALKRELVGSEITERALIASALNIHGEESPVGLGASA.

2 ABC transporter domains span residues 8-244 (FQME…IGRE) and 256-503 (VPAT…LNIH). Residue 40–47 (GENGAGKS) coordinates ATP.

Belongs to the ABC transporter superfamily. Ribose importer (TC 3.A.1.2.1) family. As to quaternary structure, the complex is composed of an ATP-binding protein (RbsA), two transmembrane proteins (RbsC) and a solute-binding protein (RbsB).

The protein resides in the cell inner membrane. It carries out the reaction D-ribose(out) + ATP + H2O = D-ribose(in) + ADP + phosphate + H(+). Functionally, part of the ABC transporter complex RbsABC involved in ribose import. Responsible for energy coupling to the transport system. This is Ribose import ATP-binding protein RbsA 1 from Mesorhizobium japonicum (strain LMG 29417 / CECT 9101 / MAFF 303099) (Mesorhizobium loti (strain MAFF 303099)).